The primary structure comprises 316 residues: C1GALT1-specific chaperone 1 (316 aa).

Topologically, residues M1–S6 are cytoplasmic. The helical; Signal-anchor for type II membrane protein transmembrane segment at S7 to G26 threads the bilayer. Topologically, residues H27–D316 are lumenal.

The protein belongs to the glycosyltransferase 31 family. Beta3-Gal-T subfamily. As to quaternary structure, associates with core 1 beta-3-galactosyltransferase (C1GALT1), probably not with the soluble active form.

The protein localises to the membrane. In terms of biological role, probable chaperone required for the generation of 1 O-glycan Gal-beta1-3GalNAc-alpha1-Ser/Thr (T antigen), which is a precursor for many extended O-glycans in glycoproteins. Probably acts as a specific molecular chaperone assisting the folding/stability of core 1 beta-3-galactosyltransferase (C1GALT1). The sequence is that of C1GALT1-specific chaperone 1 (C1galt1c1) from Mus musculus (Mouse).